We begin with the raw amino-acid sequence, 717 residues long: UvrABC system protein C (717 aa).

Residues 16 to 95 (DAPGVYRFHD…IKEYDPRFNV (80 aa)) form the GIY-YIG domain. The UVR domain maps to 208 to 243 (DTLIRKLDREMRQASEELEFERAARLRDDLEALRRA). 2 disordered regions span residues 517 to 555 (TAAGNGLADTAAGEPEADVAVTPQEAERTGIDPETGRPR) and 696 to 717 (HAALAAGGGTGESRDNAEGESQ). Composition is skewed to basic and acidic residues over residues 541-553 (EAERTGIDPETGR) and 707-717 (ESRDNAEGESQ).

The protein belongs to the UvrC family. Interacts with UvrB in an incision complex.

It is found in the cytoplasm. In terms of biological role, the UvrABC repair system catalyzes the recognition and processing of DNA lesions. UvrC both incises the 5' and 3' sides of the lesion. The N-terminal half is responsible for the 3' incision and the C-terminal half is responsible for the 5' incision. The chain is UvrABC system protein C from Saccharopolyspora erythraea (strain ATCC 11635 / DSM 40517 / JCM 4748 / NBRC 13426 / NCIMB 8594 / NRRL 2338).